Consider the following 179-residue polypeptide: Translation initiation factor IF-3 (179 aa).

It belongs to the IF-3 family. As to quaternary structure, monomer.

It localises to the cytoplasm. Functionally, IF-3 binds to the 30S ribosomal subunit and shifts the equilibrium between 70S ribosomes and their 50S and 30S subunits in favor of the free subunits, thus enhancing the availability of 30S subunits on which protein synthesis initiation begins. The polypeptide is Translation initiation factor IF-3 (Buchnera aphidicola subsp. Acyrthosiphon pisum (strain 5A)).